The following is a 422-amino-acid chain: F-box protein At3g12350 (422 aa).

An F-box domain is found at 5-52 (ALPFCEIPEDLQLRILSLLTPAEISSFACTSKRFASLCQEDGKIWHVM). Composition is skewed to basic and acidic residues over residues 197-207 (NNRREDQRSSG) and 242-252 (KEKERQASRTK). 2 disordered regions span residues 197–216 (NNRR…LISS) and 226–252 (LANK…SRTK).

In Arabidopsis thaliana (Mouse-ear cress), this protein is F-box protein At3g12350.